Consider the following 236-residue polypeptide: Purine nucleoside phosphorylase DeoD-type 2 (236 aa).

H5 is an a purine D-ribonucleoside binding site. Phosphate-binding positions include G21, R25, R44, and 88–91 (RVGS). A purine D-ribonucleoside contacts are provided by residues 180–182 (DME) and 204–205 (SD). The Proton donor role is filled by D205.

This sequence belongs to the PNP/UDP phosphorylase family. In terms of assembly, homohexamer; trimer of homodimers.

It carries out the reaction a purine D-ribonucleoside + phosphate = a purine nucleobase + alpha-D-ribose 1-phosphate. The enzyme catalyses a purine 2'-deoxy-D-ribonucleoside + phosphate = a purine nucleobase + 2-deoxy-alpha-D-ribose 1-phosphate. Its function is as follows. Catalyzes the reversible phosphorolytic breakdown of the N-glycosidic bond in the beta-(deoxy)ribonucleoside molecules, with the formation of the corresponding free purine bases and pentose-1-phosphate. This chain is Purine nucleoside phosphorylase DeoD-type 2, found in Aliivibrio fischeri (strain ATCC 700601 / ES114) (Vibrio fischeri).